Here is a 57-residue protein sequence, read N- to C-terminus: DELTA-limacoditoxin(2)-Dv11 (57 aa).

Positions 1–24 (MKFAKTFLLLFVVLLLLSIVMAEP) are cleaved as a signal peptide.

It belongs to the limacoditoxin-2 (cecropin-like) family. In terms of tissue distribution, expressed by the venom secretory cell of the spine. The spine is a cuticular structure containing a single large nucleated venom-secreting cell at its base. It is an independent unit capable of producing, storing and injecting venom. On the back of D.vulnerans caterpillars, spines are grouped together by 50 to 100 to form scoli, of which there are eight in D.vulnerans.

It is found in the secreted. Its function is as follows. Peptide that induces pain in mammals and has insecticidal, antibacterial and antiparasitic activities. Induces partially reversible paralysis in D.melanogaster when tested at high doses. Shows a moderate antiparasitic activity against the major pathogenic nematode of ruminants (H.contortus, EC(50)=30.5 uM). Has potent or moderate antibacterial activities against A.baumannii (MIC&lt;0.25 ug/mL) and S.aureus (MIC=16 ug/mL). Has no activity on the other bacteria tested, nor on the fungus C.albicans. Strongly induces the increase of intracellular calcium in mice DRG neurons, which is a proxy for neuronal activation that would occur during nociception. This increase is due to influx of extracellular calcium, suggesting that the peptide forms pore or channel in neuronal cell membranes. In addition, intraplantar injection in mice provokes nocifensive behavior, suggesting a pain-inducing activity. This Doratifera vulnerans (Mottled cup moth) protein is DELTA-limacoditoxin(2)-Dv11.